Here is a 92-residue protein sequence, read N- to C-terminus: Long neurotoxin 1 (92 aa).

The N-terminal stretch at 1 to 21 is a signal peptide; sequence MKTLLLTLVVVTIVCLDLGYT. Disulfide bonds link Cys-24–Cys-42, Cys-35–Cys-63, Cys-67–Cys-79, and Cys-80–Cys-85.

This sequence belongs to the three-finger toxin family. Long-chain subfamily. Type II alpha-neurotoxin sub-subfamily. In terms of tissue distribution, expressed by the venom gland.

It is found in the secreted. In terms of biological role, binds with high affinity to muscular (alpha-1/CHRNA1) and neuronal (alpha-7/CHRNA7) nicotinic acetylcholine receptor (nAChR) and inhibits acetylcholine from binding to the receptor, thereby impairing neuromuscular and neuronal transmission. The protein is Long neurotoxin 1 of Oxyuranus scutellatus scutellatus (Australian taipan).